Here is a 145-residue protein sequence, read N- to C-terminus: SsrA-binding protein (145 aa).

Belongs to the SmpB family.

It is found in the cytoplasm. Its function is as follows. Required for rescue of stalled ribosomes mediated by trans-translation. Binds to transfer-messenger RNA (tmRNA), required for stable association of tmRNA with ribosomes. tmRNA and SmpB together mimic tRNA shape, replacing the anticodon stem-loop with SmpB. tmRNA is encoded by the ssrA gene; the 2 termini fold to resemble tRNA(Ala) and it encodes a 'tag peptide', a short internal open reading frame. During trans-translation Ala-aminoacylated tmRNA acts like a tRNA, entering the A-site of stalled ribosomes, displacing the stalled mRNA. The ribosome then switches to translate the ORF on the tmRNA; the nascent peptide is terminated with the 'tag peptide' encoded by the tmRNA and targeted for degradation. The ribosome is freed to recommence translation, which seems to be the essential function of trans-translation. The polypeptide is SsrA-binding protein (Mesomycoplasma hyopneumoniae (strain 232) (Mycoplasma hyopneumoniae)).